The following is a 303-amino-acid chain: Oxygen-dependent coproporphyrinogen-III oxidase (303 aa).

Ser-93 contributes to the substrate binding site. A divalent metal cation contacts are provided by His-97 and His-107. Catalysis depends on His-107, which acts as the Proton donor. Substrate is bound at residue 109–111 (NVR). Residues His-146 and His-176 each coordinate a divalent metal cation. The segment at 241 to 276 (YVEFNLVYDRGTLFGLQSGGRTESILMSLPPQVRWG) is important for dimerization. 259–261 (GGR) lines the substrate pocket.

It belongs to the aerobic coproporphyrinogen-III oxidase family. As to quaternary structure, homodimer. The cofactor is a divalent metal cation.

The protein localises to the cytoplasm. It carries out the reaction coproporphyrinogen III + O2 + 2 H(+) = protoporphyrinogen IX + 2 CO2 + 2 H2O. The protein operates within porphyrin-containing compound metabolism; protoporphyrin-IX biosynthesis; protoporphyrinogen-IX from coproporphyrinogen-III (O2 route): step 1/1. Its function is as follows. Involved in the heme biosynthesis. Catalyzes the aerobic oxidative decarboxylation of propionate groups of rings A and B of coproporphyrinogen-III to yield the vinyl groups in protoporphyrinogen-IX. This chain is Oxygen-dependent coproporphyrinogen-III oxidase, found in Pseudomonas putida (strain ATCC 47054 / DSM 6125 / CFBP 8728 / NCIMB 11950 / KT2440).